A 165-amino-acid chain; its full sequence is Nucleotide-binding protein Tfu_2672 (165 aa).

Belongs to the YajQ family.

Functionally, nucleotide-binding protein. The sequence is that of Nucleotide-binding protein Tfu_2672 from Thermobifida fusca (strain YX).